We begin with the raw amino-acid sequence, 368 residues long: MDPAQNQPNTEPPAAPAVEEAQGVNNSEAEAPAPAALSSVSPANPPITAVPEATAPTTSQESTIPGAGYKLISTIEGHTKSISAVKFSPCGKFLGTSSADKTVKIWNMSDLSCERTLTGHKLGVNDFAWSADSKSIVTASDDKTLKIYEVPTVKMAKTLKGHTNYVFCCNFNPQSSLVVSGSFDESVRIWDVRTGMCVKTLPAHSDPVSAVSFNRDGSLITSGSYDGLVRIWDTANGQCVKTLVDDENPPVAFVKFSPNGKYILSSNLDNTLKLWDFGKGKTLKQYQGHENNKYCIFANFSVTGGKWIISGSEDCKIYVWNLQTKEVVQSLEGHTQAVIASDCHPMQNMIASGALEPDNTIRIWRSDS.

Residues 1–64 form a disordered region; the sequence is MDPAQNQPNT…APTTSQESTI (64 aa). The segment covering 16–42 has biased composition (low complexity); that stretch reads PAVEEAQGVNNSEAEAPAPAALSSVSP. 7 WD repeats span residues 77–116, 119–158, 161–200, 203–242, 246–285, 288–330, and 333–368; these read GHTKSISAVKFSPCGKFLGTSSADKTVKIWNMSDLSCERT, GHKLGVNDFAWSADSKSIVTASDDKTLKIYEVPTVKMAKT, GHTNYVFCCNFNPQSSLVVSGSFDESVRIWDVRTGMCVKT, AHSDPVSAVSFNRDGSLITSGSYDGLVRIWDTANGQCVKT, DENPPVAFVKFSPNGKYILSSNLDNTLKLWDFGKGKTLKQ, GHEN…VVQS, and GHTQAVIASDCHPMQNMIASGALEPDNTIRIWRSDS.

The chain is WD repeat-containing protein wdr-5.1 from Caenorhabditis briggsae.